Here is a 442-residue protein sequence, read N- to C-terminus: Cytochrome c biogenesis protein CcsB (442 aa).

The next 3 membrane-spanning stretches (helical) occupy residues 17–37 (LRLAILLLLVIAIASMAGTVI), 76–96 (TPWYLTLLVLFGASLTACTLT), and 162–182 (LGPIVVHASMLLILLGGILGA).

The protein belongs to the Ccs1/CcsB family. As to quaternary structure, may interact with CcsA.

It localises to the cellular thylakoid membrane. In terms of biological role, required during biogenesis of c-type cytochromes (cytochrome c6 and cytochrome f) at the step of heme attachment. This Thermosynechococcus vestitus (strain NIES-2133 / IAM M-273 / BP-1) protein is Cytochrome c biogenesis protein CcsB.